We begin with the raw amino-acid sequence, 178 residues long: Caveolin-1 (178 aa).

S2 carries the post-translational modification N-acetylserine. S2 bears the Phosphoserine mark. The segment at 2-94 is required for homooligomerization; sequence SGGKYVDSEG…WKASFTTFTV (93 aa). Topologically, residues 2–104 are cytoplasmic; that stretch reads SGGKYVDSEG…TKYWFYRLLS (103 aa). The residue at position 5 (K5) is an N6-acetyllysine; alternate. Residue K5 forms a Glycyl lysine isopeptide (Lys-Gly) (interchain with G-Cter in ubiquitin); alternate linkage. Y6 is subject to Phosphotyrosine. The residue at position 9 (S9) is a Phosphoserine. At Y14 the chain carries Phosphotyrosine; by ABL1. Residue Y25 is modified to Phosphotyrosine. Residues K26 and K30 each participate in a glycyl lysine isopeptide (Lys-Gly) (interchain with G-Cter in ubiquitin) cross-link. A Phosphoserine modification is found at S37. Glycyl lysine isopeptide (Lys-Gly) (interchain with G-Cter in ubiquitin) cross-links involve residues K39, K47, and K57. Residues 82 to 94 are interaction with CAVIN3; sequence DGIWKASFTTFTV. An intramembrane region (helical) is located at residues 105 to 125; that stretch reads ALFGIPMALIWGIYFAILSFL. The Cytoplasmic portion of the chain corresponds to 126-178; it reads HIWAVVPCIKSFLIEIQCISRVYSIYIHTVCDPLFEAIGKIFSNVRIGLQKEI. Residues 131–142 are interacts with SPRY1, SPRY2, SPRY3 and SPRY4; sequence VPCIKSFLIEIQ. S-palmitoyl cysteine attachment occurs at residues C133, C143, and C156. Positions 149–160 are interacts with SPRY1, SPRY2, and SPRY4; the sequence is SIYIHTVCDPLF. Residues 167 to 178 are interacts with SPRY1, SPRY2, SPRY3 and SPRY4; that stretch reads FSNVRIGLQKEI.

This sequence belongs to the caveolin family. Homooligomer. Interacts with GLIPR2. Interacts with NOSTRIN. Interacts with SNAP25 and STX1A. Interacts (via the N-terminus) with DPP4; the interaction is direct. Interacts with CTNNB1, CDH1 and JUP. Interacts with PACSIN2; this interaction induces membrane tubulation. Interacts with SLC7A9. Interacts with BMX and BTK. Interacts with TGFBR1. Interacts with CAVIN3 (via leucine-zipper domain) in a cholesterol-sensitive manner. Interacts with CAVIN1. Interacts with EHD2 in a cholesterol-dependent manner. Forms a ternary complex with UBXN6 and VCP; mediates CAV1 targeting to lysosomes for degradation. Interacts with ABCG1; this interaction regulates ABCG1-mediated cholesterol efflux. Interacts with NEU3; this interaction enhances NEU3 sialidase activity within caveola. Interacts (via C-terminus) with SPRY1, SPRY2 (via C-terminus), SPRY3, and SPRY4. Interacts with IGFBP5; this interaction allows trafficking of IGFBP5 from the plasma membrane to the nucleus. Post-translationally, phosphorylated at Tyr-14 by ABL1 in response to oxidative stress. In terms of processing, ubiquitinated. Undergo monoubiquitination and multi- and/or polyubiquitination. Monoubiquitination of N-terminal lysines promotes integration in a ternary complex with UBXN6 and VCP which promotes oligomeric CAV1 targeting to lysosomes for degradation. Ubiquitinated by ZNRF1; leading to degradation and modulation of the TLR4-mediated immune response.

It is found in the golgi apparatus membrane. The protein localises to the cell membrane. The protein resides in the membrane. Its subcellular location is the caveola. It localises to the membrane raft. Functionally, may act as a scaffolding protein within caveolar membranes. Forms a stable heterooligomeric complex with CAV2 that targets to lipid rafts and drives caveolae formation. Mediates the recruitment of CAVIN proteins (CAVIN1/2/3/4) to the caveolae. Interacts directly with G-protein alpha subunits and can functionally regulate their activity. Involved in the costimulatory signal essential for T-cell receptor (TCR)-mediated T-cell activation. Its binding to DPP4 induces T-cell proliferation and NF-kappa-B activation in a T-cell receptor/CD3-dependent manner. Recruits CTNNB1 to caveolar membranes and may regulate CTNNB1-mediated signaling through the Wnt pathway. Negatively regulates TGFB1-mediated activation of SMAD2/3 by mediating the internalization of TGFBR1 from membrane rafts leading to its subsequent degradation. Binds 20(S)-hydroxycholesterol (20(S)-OHC). This Saimiri boliviensis boliviensis (Bolivian squirrel monkey) protein is Caveolin-1 (CAV1).